Consider the following 291-residue polypeptide: Meteorin (291 aa).

The N-terminal stretch at 1 to 21 (MLVATLLCALCCGLLAASAHA) is a signal peptide. Cystine bridges form between C28–C49, C80–C116, C169–C240, C172–C264, and C182–C286.

Belongs to the meteorin family. In terms of assembly, monomer. As to expression, highly expressed in brain. Expressed in undifferentiated neural progenitors and in astrocyte lineage, particularly in Bergmann glia, a subtype of radial glia, and a few discrete neuronal populations residing in the superior colliculus, the ocular motor nucleus, the raphe and pontine nuclei, and in various thalamic nuclei. Weakly expressed in heart, kidney, skeletal muscle, spleen, testis, gut and lung.

The protein resides in the secreted. Its function is as follows. Involved in both glial cell differentiation and axonal network formation during neurogenesis. Promotes astrocyte differentiation and transforms cerebellar astrocytes into radial glia. Also induces axonal extension in small and intermediate neurons of sensory ganglia by activating nearby satellite glia. The chain is Meteorin (Metrn) from Mus musculus (Mouse).